Consider the following 475-residue polypeptide: Sulfate adenylyltransferase subunit 1 (475 aa).

Residues 25–239 (KSLLRFLTCG…EVLETVEIQR (215 aa)) enclose the tr-type G domain. A G1 region spans residues 34 to 41 (GSVDDGKS). 34-41 (GSVDDGKS) lines the GTP pocket. The segment at 92 to 96 (GITID) is G2. Residues 113 to 116 (DTPG) form a G3 region. GTP contacts are provided by residues 113–117 (DTPGH) and 168–171 (NKMD). The segment at 168–171 (NKMD) is G4. A G5 region spans residues 206-208 (SAL).

It belongs to the TRAFAC class translation factor GTPase superfamily. Classic translation factor GTPase family. CysN/NodQ subfamily. Heterodimer composed of CysD, the smaller subunit, and CysN.

It carries out the reaction sulfate + ATP + H(+) = adenosine 5'-phosphosulfate + diphosphate. Its pathway is sulfur metabolism; hydrogen sulfide biosynthesis; sulfite from sulfate: step 1/3. Functionally, with CysD forms the ATP sulfurylase (ATPS) that catalyzes the adenylation of sulfate producing adenosine 5'-phosphosulfate (APS) and diphosphate, the first enzymatic step in sulfur assimilation pathway. APS synthesis involves the formation of a high-energy phosphoric-sulfuric acid anhydride bond driven by GTP hydrolysis by CysN coupled to ATP hydrolysis by CysD. The chain is Sulfate adenylyltransferase subunit 1 from Citrobacter koseri (strain ATCC BAA-895 / CDC 4225-83 / SGSC4696).